Reading from the N-terminus, the 1368-residue chain is DNA-directed RNA polymerase subunit beta (1368 aa).

It belongs to the RNA polymerase beta chain family. The RNAP catalytic core consists of 2 alpha, 1 beta, 1 beta' and 1 omega subunit. When a sigma factor is associated with the core the holoenzyme is formed, which can initiate transcription.

It carries out the reaction RNA(n) + a ribonucleoside 5'-triphosphate = RNA(n+1) + diphosphate. Functionally, DNA-dependent RNA polymerase catalyzes the transcription of DNA into RNA using the four ribonucleoside triphosphates as substrates. The protein is DNA-directed RNA polymerase subunit beta of Cupriavidus pinatubonensis (strain JMP 134 / LMG 1197) (Cupriavidus necator (strain JMP 134)).